The following is a 326-amino-acid chain: Transmembrane protein PVRIG (326 aa).

Helical transmembrane passes span 26–46 (LVLP…EVWV), 62–78 (CGFL…VSWG), and 172–192 (LAGI…LLHL). Tyr233 is subject to Phosphotyrosine. The disordered stretch occupies residues 296-326 (AGERPPHTGPGLTLFPDPRGPRAMEGPLGVR).

Interacts with NECTIN2, hence competing with CD226. Expressed in some types of immune cells. Expressed at low levels on the surface of freshly isolated T-cells and natural killer (NK) cells, predominantly on CD8+ T-cells (mainly memory/effector, but not naive cells) and on both CD16+ and CD16- NK cells. T-cell expression levels are variable among individuals. Not detected in B-cells, naive or helper T-cells, monocytes, nor neutrophils (at protein level). Not detected in dendritic cells.

It localises to the cell membrane. Its function is as follows. Cell surface receptor for NECTIN2. May act as a coinhibitory receptor that suppresses T-cell receptor-mediated signals. Following interaction with NECTIN2, inhibits T-cell proliferation. Competes with CD226 for NECTIN2-binding. This Homo sapiens (Human) protein is Transmembrane protein PVRIG (PVRIG).